The following is a 132-amino-acid chain: Prefoldin subunit alpha (132 aa).

It belongs to the prefoldin subunit alpha family. As to quaternary structure, heterohexamer of two alpha and four beta subunits.

The protein localises to the cytoplasm. Molecular chaperone capable of stabilizing a range of proteins. Seems to fulfill an ATP-independent, HSP70-like function in archaeal de novo protein folding. The polypeptide is Prefoldin subunit alpha (Pyrobaculum islandicum (strain DSM 4184 / JCM 9189 / GEO3)).